The sequence spans 577 residues: Leucine-rich repeat protein soc-2 homolog (577 aa).

Basic and acidic residues-rich tracts occupy residues 1-10 (MRRTKGRTDS) and 33-48 (STAHKSDKKHDPEAKK). Positions 1–71 (MRRTKGRTDS…PTVKKRSTPS (71 aa)) are disordered. LRR repeat units lie at residues 87–109 (GATRLDLSKAAVTVLPKELKELT), 110–131 (SLRELYLYGNRIAVLPPEVGLL), 133–155 (NLETLALSENNLTTLPDNLVKLT), 156–177 (KLKVLDLRHNKIKEIPDVIYKL), 179–201 (TLTTLYLRFNRISVVESGIGNLK), 202–223 (LLERLSLRENKIKILPRVIGQL), 225–246 (HLVTLDISHNHIENLPAEIGNC), 248–269 (HMTSLDLQHNDIPSLPDSIGRL), 271–292 (AMTRLGLRYNQLSSLPDSLANC), 294–315 (GIDEFNIEGNNIAELPEKLLSS), 318–339 (NLTSLTLSRNKFEVFPAGPPKQ), 342–363 (QVNTFIMEHNRMQKIPFGVFNK), 366–387 (YLSKLNVKDNQLTSLPLDFGSW), 389–410 (SLVELNVATNQISKLPEDIQWL), 412–434 (NLEVLILSNNLLKKLPRGIGALR), 435–456 (KLRVLDIEENKLESIPTEIEYL), 458–479 (SLERLVLQSNCLGSLPRSIGYL), 481–502 (SVTYLSVGENELVSVPQEIGNM), 504–526 (SLEQLYLNDNENLQSLPYELVLC), and 528–549 (SLQIMSIENCPLSALPSQIVAG).

This sequence belongs to the SHOC2 family.

Acts as a Ras effector and participates in MAPK pathway activation. Probably acts as a scaffolding protein in a protein phosphatase complex that specifically dephosphorylates Raf kinase and stimulate Raf activity at specialized signaling complexes upon Ras activation. This chain is Leucine-rich repeat protein soc-2 homolog, found in Nematostella vectensis (Starlet sea anemone).